We begin with the raw amino-acid sequence, 307 residues long: Taste receptor type 2 member 106 (307 aa).

The Extracellular segment spans residues 1-7 (MLTIPEG). Residues 8–28 (ILLCFITSGSVLGVLGNGFIL) traverse the membrane as a helical segment. The Cytoplasmic portion of the chain corresponds to 29–41 (HVNCTDCVRQKFS). The helical transmembrane segment at 42–62 (TTGFIFTGLAISRICVICIII) threads the bilayer. Residues 63 to 81 (SDGYLKLFSPHMVASDAHI) are Extracellular-facing. The helical transmembrane segment at 82–104 (IGISYLWIITNHTSTCFATILNL) threads the bilayer. Over 105–124 (FYFLKIANFSHYIFFCLKRK) the chain is Cytoplasmic. A helical membrane pass occupies residues 125–145 (LNTIFIFLLGCLFISWSVAFP). The Extracellular segment spans residues 146 to 179 (QTVKIFNDKMKHRNTSWKFHLHKSKFIINHILLN). Asparagine 159 carries N-linked (GlcNAc...) asparagine glycosylation. Residues 180–200 (LGVIFFCMVAIITSFLLIISL) form a helical membrane-spanning segment. At 201-227 (WKHNRKMQLYVSRFKSLNTEVHLKVMK) the chain is on the cytoplasmic side. A helical membrane pass occupies residues 228 to 248 (VLISFIILLILHVIGILIETL). The Extracellular segment spans residues 249–257 (SFLRYENKL). A helical transmembrane segment spans residues 258–278 (LLILGLNFSSMYPCCHSFILI). Residues 279-307 (LANNQLKQASLKALKQFKCHKKDKDVRET) lie on the Cytoplasmic side of the membrane.

The protein belongs to the G-protein coupled receptor T2R family.

The protein resides in the membrane. Its function is as follows. Putative taste receptor which may play a role in the perception of bitterness. The polypeptide is Taste receptor type 2 member 106 (Rattus norvegicus (Rat)).